A 429-amino-acid polypeptide reads, in one-letter code: Putative pentatricopeptide repeat-containing protein At1g03510 (429 aa).

PPR repeat units follow at residues 11–45 (KLIS…FALP), 47–81 (DAHV…NFLS), 82–112 (NPFV…IPQR), 113–147 (NAVV…PNES), 148–180 (SFNA…RFKP), 181–215 (NLIT…LIEP), 216–246 (HPQL…MEDR), 247–281 (DVVA…KVTP), 282–312 (DDIA…MQGD), and 318–348 (SKDH…MPEK). The interval 353 to 428 (TWGALLGACR…SPGSSWCLFK (76 aa)) is type E motif.

Belongs to the PPR family. PCMP-E subfamily.

This is Putative pentatricopeptide repeat-containing protein At1g03510 (PCMP-E3) from Arabidopsis thaliana (Mouse-ear cress).